We begin with the raw amino-acid sequence, 192 residues long: Fibroblast growth factor 4B (192 aa).

The signal sequence occupies residues 1–22 (MTVQLALVPILLLGTAAVMVHC).

This sequence belongs to the heparin-binding growth factors family.

It localises to the secreted. In terms of biological role, plays an important role in the regulation of embryonic development, cell proliferation, and cell differentiation. Good candidate for an inducing factor with possible roles both in mesoderm induction at the blastula stage and in the formation of the anteroposterior axis at the gastrula stage. In Xenopus laevis (African clawed frog), this protein is Fibroblast growth factor 4B (fgf4-b).